The sequence spans 283 residues: Putative Ig-like domain-containing protein ORF10 (283 aa).

An N-terminal signal peptide occupies residues 1 to 55 (MIDKRNKKAVTHISTCLCHSSIPIYGDSPFLNTHRAAMDPRPLVLLLLLASHIST). N-linked (GlcNAc...) asparagine; by host glycans are attached at residues Asn-75, Asn-92, Asn-121, Asn-157, Asn-179, Asn-198, Asn-223, and Asn-229. The region spanning 129–227 (QPLGQSIHHA…IDQQTNLTLT (99 aa)) is the Ig-like domain.

The polypeptide is Putative Ig-like domain-containing protein ORF10 (Galliformes (FAdV-1)).